The sequence spans 834 residues: Leucine--tRNA ligase (834 aa).

The 'HIGH' region motif lies at 36 to 46 (PYPSGKIHVGH). A 'KMSKS' region motif is present at residues 602–606 (KMSKS). K605 contacts ATP.

This sequence belongs to the class-I aminoacyl-tRNA synthetase family.

It is found in the cytoplasm. The catalysed reaction is tRNA(Leu) + L-leucine + ATP = L-leucyl-tRNA(Leu) + AMP + diphosphate. This chain is Leucine--tRNA ligase, found in Rickettsia canadensis (strain McKiel).